A 98-amino-acid polypeptide reads, in one-letter code: Integration host factor subunit alpha (98 aa).

The tract at residues 49–70 (FGNFDLRDKNQRPGRNPKTGED) is disordered.

This sequence belongs to the bacterial histone-like protein family. Heterodimer of an alpha and a beta chain.

Its function is as follows. This protein is one of the two subunits of integration host factor, a specific DNA-binding protein that functions in genetic recombination as well as in transcriptional and translational control. The protein is Integration host factor subunit alpha of Serratia proteamaculans (strain 568).